A 348-amino-acid polypeptide reads, in one-letter code: NAC domain-containing protein 101 (348 aa).

In terms of domain architecture, NAC spans 7 to 156 (IPPGYRFHPT…GWVVCRAFKK (150 aa)). The DNA-binding element occupies 107–162 (VGMRKTLVFYKGRAPNGQKSDWIMHEYRLETDENGPPHEEGWVVCRAFKKKLTTMN). Residues 325–348 (MVSMNASSSSSPCSFYSWAQNTHT) are disordered. Over residues 327-341 (SMNASSSSSPCSFYS) the composition is skewed to low complexity.

It belongs to the plant vascular related NAC-domain protein family. In terms of assembly, homodimer. In terms of tissue distribution, expressed in root inner metaxylem vessels and in hypocotyl vessels. Present in root developing xylems. Accumulates in the xylem but not in interfascicular fibers or pith cells in inflorescence stems. Absent from secondary xylem in roots.

It localises to the nucleus. Its function is as follows. Transcription activator that binds to the secondary wall NAC binding element (SNBE), 5'-(T/A)NN(C/T)(T/C/G)TNNNNNNNA(A/C)GN(A/C/T)(A/T)-3', and to the tracheary elements (TE) specific regulating cis-element (TERE), 5'-CTTNAAAGCNA-3', in the promoter of target genes (e.g. genes involved in secondary wall biosynthesis, cell wall modification such as xylan accumulation, and programmed cell death). Involved in xylem formation in roots and shoots, especially regulating metaxylem vessel differentiation by promoting immature xylem vessel-specific genes expression, especially genes regulating programmed cell death (PCD) and secondary wall formation in tracheary elements (TE). Can activate MYB25, MYB46, MYB58, MYB63, MYB83, MYB103, CESA4, LBD15, LBD30, ERF115, XCP1, XCP2, NAC010/SND3, KNAT7, ASL19 and ASL20 expression. This chain is NAC domain-containing protein 101, found in Arabidopsis thaliana (Mouse-ear cress).